The primary structure comprises 253 residues: Neurotrophin-3 (253 aa).

The N-terminal stretch at 1–18 (MSILFYVMFLAYLRGVQG) is a signal peptide. A propeptide spanning residues 19 to 134 (NSMDQRSLPE…AANRTSRRKR (116 aa)) is cleaved from the precursor. The interval 62–89 (TLPKAEAPPREPAKSEFQPVTAMGPELL) is disordered. The N-linked (GlcNAc...) asparagine glycan is linked to Asn127. Intrachain disulfides connect Cys148–Cys213, Cys191–Cys242, and Cys201–Cys244.

Belongs to the NGF-beta family.

The protein resides in the secreted. In terms of biological role, seems to promote the survival of visceral and proprioceptive sensory neurons. This chain is Neurotrophin-3 (NTF3), found in Bos taurus (Bovine).